Here is a 376-residue protein sequence, read N- to C-terminus: MKDVPGFLQQSQSSGPGQAAVWHRLEELYTKKLWHQLTLQVLDFVQDPCFAQGDGLIKLYENFISEFEHRVNPLSLVEIILHVVRQMTDPNVALSFLEKTREKVKSSDEAVILCKTAIGALKLNIGDLQVTKETIEDVEEMLSNLPGVTSVHSRFYDLSSKYYQTIGNHASYYKDALRFLGCVDIKDLPVSEQQERAFTLGLAGLLGDGVFNFGELLMHPVLESLRDTDRQWLIDTLYAFNSGNVERFQTLKTAWGQQPDLAANEAQLLRKIQLLCLMEMTFTRPANHRQLTFEEIARSAKITVNEVELLVMKALSVGLVKGSIDEVDKRVHMTWVQPRVLDLQQIKGMKDRLEFWCTDVKSMEMLVEHQAHDILT.

In terms of domain architecture, PCI spans 171 to 338 (SYYKDALRFL…KRVHMTWVQP (168 aa)).

It belongs to the proteasome subunit S11 family. Component of the 19S proteasome regulatory particle complex. The 26S proteasome consists of a 20S core particle (CP) and two 19S regulatory subunits (RP). The regulatory particle is made of a lid composed of 9 subunits including PSMD13, a base containing 6 ATPases and few additional components.

In terms of biological role, component of the 26S proteasome, a multiprotein complex involved in the ATP-dependent degradation of ubiquitinated proteins. This complex plays a key role in the maintenance of protein homeostasis by removing misfolded or damaged proteins, which could impair cellular functions, and by removing proteins whose functions are no longer required. Therefore, the proteasome participates in numerous cellular processes, including cell cycle progression, apoptosis, or DNA damage repair. The sequence is that of 26S proteasome non-ATPase regulatory subunit 13 (PSMD13) from Bos taurus (Bovine).